The sequence spans 313 residues: Beta-ketoacyl-[acyl-carrier-protein] synthase III (313 aa).

Residues Cys112 and His238 contribute to the active site. The tract at residues 239–243 (QANIR) is ACP-binding. Asn268 is an active-site residue.

Belongs to the thiolase-like superfamily. FabH family. Homodimer.

It localises to the cytoplasm. The enzyme catalyses malonyl-[ACP] + acetyl-CoA + H(+) = 3-oxobutanoyl-[ACP] + CO2 + CoA. It functions in the pathway lipid metabolism; fatty acid biosynthesis. In terms of biological role, catalyzes the condensation reaction of fatty acid synthesis by the addition to an acyl acceptor of two carbons from malonyl-ACP. Catalyzes the first condensation reaction which initiates fatty acid synthesis and may therefore play a role in governing the total rate of fatty acid production. Possesses both acetoacetyl-ACP synthase and acetyl transacylase activities. Its substrate specificity determines the biosynthesis of branched-chain and/or straight-chain of fatty acids. This Staphylococcus aureus (strain COL) protein is Beta-ketoacyl-[acyl-carrier-protein] synthase III.